Consider the following 382-residue polypeptide: S-adenosylmethionine synthase (382 aa).

Histidine 16 lines the ATP pocket. Aspartate 18 provides a ligand contact to Mg(2+). A K(+)-binding site is contributed by glutamate 44. Residues glutamate 57 and glutamine 100 each coordinate L-methionine. The interval 100 to 110 (QSPDIAQGVDN) is flexible loop. ATP-binding positions include 165-167 (DAK), 231-232 (RF), aspartate 240, 246-247 (RK), and lysine 267. Aspartate 240 contributes to the L-methionine binding site. An L-methionine-binding site is contributed by lysine 271.

This sequence belongs to the AdoMet synthase family. In terms of assembly, homotetramer; dimer of dimers. Mg(2+) serves as cofactor. It depends on K(+) as a cofactor.

Its subcellular location is the cytoplasm. It catalyses the reaction L-methionine + ATP + H2O = S-adenosyl-L-methionine + phosphate + diphosphate. It functions in the pathway amino-acid biosynthesis; S-adenosyl-L-methionine biosynthesis; S-adenosyl-L-methionine from L-methionine: step 1/1. Its function is as follows. Catalyzes the formation of S-adenosylmethionine (AdoMet) from methionine and ATP. The overall synthetic reaction is composed of two sequential steps, AdoMet formation and the subsequent tripolyphosphate hydrolysis which occurs prior to release of AdoMet from the enzyme. The chain is S-adenosylmethionine synthase from Legionella pneumophila (strain Lens).